Here is a 257-residue protein sequence, read N- to C-terminus: Pyridoxine/pyridoxamine 5'-phosphate oxidase (257 aa).

A substrate-binding site is contributed by 33–36; sequence RIKY. 90 to 93 is an FMN binding site; that stretch reads RFVL. Lys-95 lines the pyridoxal 5'-phosphate pocket. FMN contacts are provided by residues 105–106 and Lys-112; that span reads YT. Pyridoxal 5'-phosphate contacts are provided by Tyr-152, Arg-156, and Ser-160. FMN is bound by residues 169–170 and Trp-216; that span reads QS. 222–224 is a binding site for substrate; sequence RLH. Arg-226 serves as a coordination point for FMN.

Belongs to the pyridoxamine 5'-phosphate oxidase family. Homodimer. It depends on FMN as a cofactor. As to expression, expressed in silk gland and fat body of the larva.

The catalysed reaction is pyridoxamine 5'-phosphate + O2 + H2O = pyridoxal 5'-phosphate + H2O2 + NH4(+). The enzyme catalyses pyridoxine 5'-phosphate + O2 = pyridoxal 5'-phosphate + H2O2. Its pathway is cofactor metabolism; pyridoxal 5'-phosphate salvage; pyridoxal 5'-phosphate from pyridoxamine 5'-phosphate: step 1/1. The protein operates within cofactor metabolism; pyridoxal 5'-phosphate salvage; pyridoxal 5'-phosphate from pyridoxine 5'-phosphate: step 1/1. Catalyzes the oxidation of either pyridoxine 5'-phosphate (PNP) or pyridoxamine 5'-phosphate (PMP) into pyridoxal 5'-phosphate (PLP). This chain is Pyridoxine/pyridoxamine 5'-phosphate oxidase, found in Bombyx mori (Silk moth).